We begin with the raw amino-acid sequence, 518 residues long: uncharacterized protein (518 aa).

14 helical membrane passes run 13-33 (WAIS…GIIS), 49-69 (WGSW…PIVG), 86-106 (CLFG…LFLI), 109-129 (LIQA…ILAT), 141-161 (LLGA…SFLL), 169-189 (WLFL…ACFI), 202-222 (AAGI…MTNL), 231-251 (LGNP…AALI), 280-300 (LIIG…PSYV), 312-332 (GYWM…GGAL), 341-361 (TVIL…LWVT), 365-385 (EFVI…GAPL), 410-430 (IGLT…FDQI), and 493-513 (LYAA…IPAF).

It belongs to the major facilitator superfamily. TCR/Tet family.

The protein localises to the cell membrane. This is an uncharacterized protein from Bacillus subtilis (strain 168).